The following is a 130-amino-acid chain: Small ribosomal subunit protein uS9 (130 aa).

It belongs to the universal ribosomal protein uS9 family.

In Clostridium perfringens (strain ATCC 13124 / DSM 756 / JCM 1290 / NCIMB 6125 / NCTC 8237 / Type A), this protein is Small ribosomal subunit protein uS9.